Here is a 183-residue protein sequence, read N- to C-terminus: Protein Syd (183 aa).

It belongs to the Syd family.

It localises to the cell inner membrane. Functionally, interacts with the SecY protein in vivo. May bind preferentially to an uncomplexed state of SecY, thus functioning either as a chelating agent for excess SecY in the cell or as a regulatory factor that negatively controls the translocase function. In Yersinia enterocolitica serotype O:8 / biotype 1B (strain NCTC 13174 / 8081), this protein is Protein Syd.